The chain runs to 132 residues: Small ribosomal subunit protein uS11 (132 aa).

It belongs to the universal ribosomal protein uS11 family. Part of the 30S ribosomal subunit.

In terms of biological role, located on the platform of the 30S subunit. The polypeptide is Small ribosomal subunit protein uS11 (Saccharolobus solfataricus (strain ATCC 35092 / DSM 1617 / JCM 11322 / P2) (Sulfolobus solfataricus)).